The chain runs to 289 residues: Phospholipase A1 (289 aa).

An N-terminal signal peptide occupies residues 1–20; the sequence is MRAILRGLLPATLLPLAAYA. Residues 21–52 lie on the Periplasmic side of the membrane; the sequence is QEATIKEVHDAPAVRGSIIANMLQEHDNPFTL. The beta stranded transmembrane segment at 53-65 threads the bilayer; sequence YPYDTNYLIYTNT. At 66 to 84 the chain is on the extracellular side; the sequence is SDLNKEAISTYNWSENARK. Residues 85–99 traverse the membrane as a beta stranded segment; the sequence is DEVKFQLSLAFPLWR. The Periplasmic segment spans residues 100–105; sequence GILGPN. The chain crosses the membrane as a beta stranded span at residues 106-118; the sequence is SVLGASYTQKSWW. Residues 119-128 are Extracellular-facing; that stretch reads QLSNSKESSP. Serine 126 serves as a coordination point for Ca(2+). The chain crosses the membrane as a beta stranded span at residues 129–148; the sequence is FRETNYEPQLFLGFATDYRF. Residues 149-150 are Periplasmic-facing; that stretch reads AG. Residues 151–164 traverse the membrane as a beta stranded segment; it reads WTLRDVEMGYNHDS. Residue histidine 162 is the Proton acceptor of the active site. The Nucleophile role is filled by serine 164. The Extracellular portion of the chain corresponds to 165-173; sequence NGRSDPTSR. Ca(2+)-binding residues include arginine 167 and serine 172. A beta stranded membrane pass occupies residues 174–186; it reads SWNRLYTRLMAEN. The Periplasmic segment spans residues 187 to 188; sequence GN. A beta stranded transmembrane segment spans residues 189-198; that stretch reads WLVEVKPWYV. At 199 to 216 the chain is on the extracellular side; the sequence is IGSTDDNPDITKYMGYYQ. Residue aspartate 204 participates in Ca(2+) binding. A beta stranded transmembrane segment spans residues 217 to 223; sequence LKIGYHL. Residues 224-225 are Periplasmic-facing; it reads GE. The chain crosses the membrane as a beta stranded span at residues 226-234; it reads AVLSAKGQY. Topologically, residues 235 to 241 are extracellular; that stretch reads NWNTGYG. The beta stranded transmembrane segment at 242–250 threads the bilayer; that stretch reads GAEVGLSYP. Residues 251 to 255 are Periplasmic-facing; sequence VTKHV. Residues 256–265 traverse the membrane as a beta stranded segment; sequence RLYTQVYSGY. At 266-274 the chain is on the extracellular side; sequence GESLIDYNF. Residues 275 to 286 traverse the membrane as a beta stranded segment; sequence NQTRVGVGVMLN. The Periplasmic portion of the chain corresponds to 287–289; it reads DIF.

This sequence belongs to the phospholipase A1 family. As to quaternary structure, homodimer; dimerization is reversible, and the dimeric form is the active one. Requires Ca(2+) as cofactor.

It localises to the cell outer membrane. The catalysed reaction is a 1,2-diacyl-sn-glycero-3-phosphocholine + H2O = a 2-acyl-sn-glycero-3-phosphocholine + a fatty acid + H(+). It carries out the reaction a 1,2-diacyl-sn-glycero-3-phosphocholine + H2O = a 1-acyl-sn-glycero-3-phosphocholine + a fatty acid + H(+). Its function is as follows. Hydrolysis of phosphatidylcholine with phospholipase A2 (EC 3.1.1.4) and phospholipase A1 (EC 3.1.1.32) activities. This is Phospholipase A1 (pldA) from Salmonella typhi.